The following is a 237-amino-acid chain: Large ribosomal subunit protein uL3 (237 aa).

Disordered stretches follow at residues 133–155 and 213–237; these read ASHG…DPGK and PENA…EGGE. Residues 135–150 are compositionally biased toward polar residues; the sequence is HGNSITHRSHGSTGQR. N5-methylglutamine is present on Q151. Low complexity predominate over residues 220–237; the sequence is AGLRAGAKAEAAATEGGE.

It belongs to the universal ribosomal protein uL3 family. Part of the 50S ribosomal subunit. Forms a cluster with proteins L14 and L19. Post-translationally, methylated by PrmB.

One of the primary rRNA binding proteins, it binds directly near the 3'-end of the 23S rRNA, where it nucleates assembly of the 50S subunit. In Brucella abortus (strain S19), this protein is Large ribosomal subunit protein uL3.